The chain runs to 344 residues: Heat-inducible transcription repressor HrcA (344 aa).

Belongs to the HrcA family.

In terms of biological role, negative regulator of class I heat shock genes (grpE-dnaK-dnaJ and groELS operons). Prevents heat-shock induction of these operons. This Streptococcus pneumoniae (strain ATCC 700669 / Spain 23F-1) protein is Heat-inducible transcription repressor HrcA.